Here is a 761-residue protein sequence, read N- to C-terminus: Coenzyme PQQ synthesis protein F (761 aa).

His-49 is a Zn(2+) binding site. The active-site Proton acceptor is Glu-52. The Zn(2+) site is built by His-53 and Glu-130.

It belongs to the peptidase M16 family. The cofactor is Zn(2+).

It functions in the pathway cofactor biosynthesis; pyrroloquinoline quinone biosynthesis. In terms of biological role, required for coenzyme pyrroloquinoline quinone (PQQ) biosynthesis. It is thought that this protein is a protease that cleaves peptides bond in a small peptide (gene pqqA), providing the glutamate and tyrosine residues which are necessary for the synthesis of PQQ. The protein is Coenzyme PQQ synthesis protein F (pqqF) of Klebsiella pneumoniae.